The primary structure comprises 163 residues: Arginine repressor (163 aa).

Belongs to the ArgR family.

Its subcellular location is the cytoplasm. The protein operates within amino-acid biosynthesis; L-arginine biosynthesis [regulation]. In terms of biological role, regulates arginine biosynthesis genes. The sequence is that of Arginine repressor from Corynebacterium diphtheriae (strain ATCC 700971 / NCTC 13129 / Biotype gravis).